Reading from the N-terminus, the 361-residue chain is Phosphoserine aminotransferase (361 aa).

L-glutamate-binding residues include Ser-9 and Arg-42. Pyridoxal 5'-phosphate is bound by residues 76-77 (GR), Trp-102, Thr-153, Asp-173, and Gln-196. Lys-197 bears the N6-(pyridoxal phosphate)lysine mark. Residue 238-239 (NT) participates in pyridoxal 5'-phosphate binding.

Belongs to the class-V pyridoxal-phosphate-dependent aminotransferase family. SerC subfamily. In terms of assembly, homodimer. Requires pyridoxal 5'-phosphate as cofactor.

The protein resides in the cytoplasm. It catalyses the reaction O-phospho-L-serine + 2-oxoglutarate = 3-phosphooxypyruvate + L-glutamate. The enzyme catalyses 4-(phosphooxy)-L-threonine + 2-oxoglutarate = (R)-3-hydroxy-2-oxo-4-phosphooxybutanoate + L-glutamate. The protein operates within amino-acid biosynthesis; L-serine biosynthesis; L-serine from 3-phospho-D-glycerate: step 2/3. It functions in the pathway cofactor biosynthesis; pyridoxine 5'-phosphate biosynthesis; pyridoxine 5'-phosphate from D-erythrose 4-phosphate: step 3/5. Functionally, catalyzes the reversible conversion of 3-phosphohydroxypyruvate to phosphoserine and of 3-hydroxy-2-oxo-4-phosphonooxybutanoate to phosphohydroxythreonine. This is Phosphoserine aminotransferase from Cronobacter sakazakii (strain ATCC BAA-894) (Enterobacter sakazakii).